The sequence spans 254 residues: 3-deoxy-manno-octulosonate cytidylyltransferase (254 aa).

The protein belongs to the KdsB family.

It is found in the cytoplasm. It catalyses the reaction 3-deoxy-alpha-D-manno-oct-2-ulosonate + CTP = CMP-3-deoxy-beta-D-manno-octulosonate + diphosphate. Its pathway is nucleotide-sugar biosynthesis; CMP-3-deoxy-D-manno-octulosonate biosynthesis; CMP-3-deoxy-D-manno-octulosonate from 3-deoxy-D-manno-octulosonate and CTP: step 1/1. The protein operates within bacterial outer membrane biogenesis; lipopolysaccharide biosynthesis. Functionally, activates KDO (a required 8-carbon sugar) for incorporation into bacterial lipopolysaccharide in Gram-negative bacteria. In Polynucleobacter asymbioticus (strain DSM 18221 / CIP 109841 / QLW-P1DMWA-1) (Polynucleobacter necessarius subsp. asymbioticus), this protein is 3-deoxy-manno-octulosonate cytidylyltransferase.